A 485-amino-acid chain; its full sequence is Probable glycine dehydrogenase (decarboxylating) subunit 2 (485 aa).

Lysine 273 carries the N6-(pyridoxal phosphate)lysine modification.

Belongs to the GcvP family. C-terminal subunit subfamily. In terms of assembly, the glycine cleavage system is composed of four proteins: P, T, L and H. In this organism, the P 'protein' is a heterodimer of two subunits. Pyridoxal 5'-phosphate serves as cofactor.

It carries out the reaction N(6)-[(R)-lipoyl]-L-lysyl-[glycine-cleavage complex H protein] + glycine + H(+) = N(6)-[(R)-S(8)-aminomethyldihydrolipoyl]-L-lysyl-[glycine-cleavage complex H protein] + CO2. In terms of biological role, the glycine cleavage system catalyzes the degradation of glycine. The P protein binds the alpha-amino group of glycine through its pyridoxal phosphate cofactor; CO(2) is released and the remaining methylamine moiety is then transferred to the lipoamide cofactor of the H protein. This chain is Probable glycine dehydrogenase (decarboxylating) subunit 2, found in Oceanobacillus iheyensis (strain DSM 14371 / CIP 107618 / JCM 11309 / KCTC 3954 / HTE831).